The chain runs to 357 residues: Hydroxyproline O-arabinosyltransferase RDN1 (357 aa).

A helical; Signal-anchor transmembrane segment spans residues 13–33 (LLMLLMVLGFSFATYNLVFMM).

Expressed in the vasculature of leaves, petioles, stems and roots. Expressed in the vascular cylinder throughout the root, and nodule vasculature.

The protein resides in the golgi apparatus membrane. It carries out the reaction trans-4-hydroxy-L-prolyl-[protein] + UDP-beta-L-arabinofuranose = O-(beta-L-arabinofuranosyl)-trans-4-hydroxy-L-prolyl-[protein] + UDP + H(+). Functionally, probable glycosyltransferase involved in the O-arabinosylation of several proteins including extensins and small signaling peptides. Catalyzes the transfer of the initial L-arabinose to the hydroxyl group of Hyp residues. Probably involved in the arabinosylation of CLE12, a signaling peptide that moves from root to shoot, to interact with SUNN receptor kinase signaling that regulates nodulation. Involved in long distance nodulation signaling events. Involved in the autoregulation of nodulation (AON), a long distance systemic signaling from root to shoot and back again, which allows legumes to limit the number of root nodules formed based on available nitrogen and previous rhizobial colonization. Functions in the root, upstream of the shoot receptor kinase SUNN and via CLE peptide, to control AON. The chain is Hydroxyproline O-arabinosyltransferase RDN1 from Medicago truncatula (Barrel medic).